Consider the following 247-residue polypeptide: 2,3-bisphosphoglycerate-dependent phosphoglycerate mutase (247 aa).

Substrate contacts are provided by residues 8 to 15 (RHGESTWN), 21 to 22 (TG), Arg-60, 87 to 90 (ERHY), Lys-98, 114 to 115 (RR), and 183 to 184 (GN). His-9 acts as the Tele-phosphohistidine intermediate in catalysis. Glu-87 (proton donor/acceptor) is an active-site residue.

The protein belongs to the phosphoglycerate mutase family. BPG-dependent PGAM subfamily. In terms of assembly, homodimer.

It catalyses the reaction (2R)-2-phosphoglycerate = (2R)-3-phosphoglycerate. The protein operates within carbohydrate degradation; glycolysis; pyruvate from D-glyceraldehyde 3-phosphate: step 3/5. Catalyzes the interconversion of 2-phosphoglycerate and 3-phosphoglycerate. The sequence is that of 2,3-bisphosphoglycerate-dependent phosphoglycerate mutase from Methylibium petroleiphilum (strain ATCC BAA-1232 / LMG 22953 / PM1).